The primary structure comprises 321 residues: Probable arabinan endo-1,5-alpha-L-arabinosidase C (321 aa).

An N-terminal signal peptide occupies residues 1–20 (MYLYTLILLFLASVNVNAYA). The active-site Proton acceptor is Asp33. 2 N-linked (GlcNAc...) asparagine glycosylation sites follow: Asn75 and Asn192. Glu200 acts as the Proton donor in catalysis. N-linked (GlcNAc...) asparagine glycosylation occurs at Asn224.

It belongs to the glycosyl hydrolase 43 family.

It localises to the secreted. It carries out the reaction Endohydrolysis of (1-&gt;5)-alpha-arabinofuranosidic linkages in (1-&gt;5)-arabinans.. The protein operates within glycan metabolism; L-arabinan degradation. Functionally, endo-1,5-alpha-L-arabinanase involved in degradation of pectin. Its preferred substrate is linear 1,5-alpha-L-arabinan. This is Probable arabinan endo-1,5-alpha-L-arabinosidase C (abnC) from Neosartorya fischeri (strain ATCC 1020 / DSM 3700 / CBS 544.65 / FGSC A1164 / JCM 1740 / NRRL 181 / WB 181) (Aspergillus fischerianus).